We begin with the raw amino-acid sequence, 540 residues long: Chaperonin GroEL (540 aa).

ATP contacts are provided by residues Thr30–Pro33, Lys51, Asp87–Thr91, Gly415, Asn479–Ala481, and Asp495.

Belongs to the chaperonin (HSP60) family. As to quaternary structure, forms a cylinder of 14 subunits composed of two heptameric rings stacked back-to-back. Interacts with the co-chaperonin GroES.

Its subcellular location is the cytoplasm. The catalysed reaction is ATP + H2O + a folded polypeptide = ADP + phosphate + an unfolded polypeptide.. In terms of biological role, together with its co-chaperonin GroES, plays an essential role in assisting protein folding. The GroEL-GroES system forms a nano-cage that allows encapsulation of the non-native substrate proteins and provides a physical environment optimized to promote and accelerate protein folding. This is Chaperonin GroEL from Raoultella planticola (Klebsiella planticola).